Consider the following 351-residue polypeptide: Renin receptor (351 aa).

The N-terminal stretch at 1–17 (MAVLVVFLSFLVADVFG) is a signal peptide. Topologically, residues 18–303 (NEFSILRSPG…YNLAYKYNFE (286 aa)) are extracellular. A helical transmembrane segment spans residues 304–324 (YPVVFNLVLWIMIGLALTLIV). At 325-351 (TCYNIWNMDPGYDSIIYRMTNQKIRMD) the chain is on the cytoplasmic side. The short motif at 347-351 (KIRMD) is the Mediates retrograde transport to the ER element.

Interacts with renin. Accessory component of the multisubunit proton-transporting vacuolar (V)-ATPase protein pump. Interacts (via N-terminus) with ATP6AP1 (via N-terminus). Interacts with ATP6V0D1; ATP6V0D1 is a V-ATPase complex subunit and the interaction promotes V-ATPase complex assembly. Interacts with TMEM9; TMEM9 is a V-ATPase assembly regulator and the interaction induces the interaction with ATP6V0D1. Interacts with VMA21 (via N-terminus); VMA21 is a V-ATPase accessory component. In terms of processing, phosphorylated. Post-translationally, proteolytically cleaved by a furin-like convertase in the trans-Golgi network to generate N- and C-terminal fragments. As to expression, expressed in the brain.

The protein localises to the endoplasmic reticulum membrane. The protein resides in the lysosome membrane. It localises to the cytoplasmic vesicle. It is found in the autophagosome membrane. Its subcellular location is the cell projection. The protein localises to the dendritic spine membrane. The protein resides in the axon. It localises to the endosome membrane. It is found in the clathrin-coated vesicle membrane. Its subcellular location is the secretory vesicle. The protein localises to the synaptic vesicle membrane. Its function is as follows. Multifunctional protein which functions as a renin, prorenin cellular receptor and is involved in the assembly of the lysosomal proton-transporting V-type ATPase (V-ATPase) and the acidification of the endo-lysosomal system. May mediate renin-dependent cellular responses by activating ERK1 and ERK2. By increasing the catalytic efficiency of renin in AGT/angiotensinogen conversion to angiotensin I, may also play a role in the renin-angiotensin system (RAS). Through its function in V-type ATPase (v-ATPase) assembly and acidification of the lysosome it regulates protein degradation and may control different signaling pathways important for proper brain development, synapse morphology and synaptic transmission. This is Renin receptor (ATP6AP2) from Bos taurus (Bovine).